We begin with the raw amino-acid sequence, 401 residues long: Probable tRNA sulfurtransferase (401 aa).

One can recognise a THUMP domain in the interval 60–165 (EEICSLLKNI…EEATFLTIRN (106 aa)). Residues 183 to 184 (ML), 208 to 209 (HF), R265, G287, and Q296 each bind ATP.

It belongs to the ThiI family.

It is found in the cytoplasm. It carries out the reaction [ThiI sulfur-carrier protein]-S-sulfanyl-L-cysteine + a uridine in tRNA + 2 reduced [2Fe-2S]-[ferredoxin] + ATP + H(+) = [ThiI sulfur-carrier protein]-L-cysteine + a 4-thiouridine in tRNA + 2 oxidized [2Fe-2S]-[ferredoxin] + AMP + diphosphate. The enzyme catalyses [ThiS sulfur-carrier protein]-C-terminal Gly-Gly-AMP + S-sulfanyl-L-cysteinyl-[cysteine desulfurase] + AH2 = [ThiS sulfur-carrier protein]-C-terminal-Gly-aminoethanethioate + L-cysteinyl-[cysteine desulfurase] + A + AMP + 2 H(+). It functions in the pathway cofactor biosynthesis; thiamine diphosphate biosynthesis. Its function is as follows. Catalyzes the ATP-dependent transfer of a sulfur to tRNA to produce 4-thiouridine in position 8 of tRNAs, which functions as a near-UV photosensor. Also catalyzes the transfer of sulfur to the sulfur carrier protein ThiS, forming ThiS-thiocarboxylate. This is a step in the synthesis of thiazole, in the thiamine biosynthesis pathway. The sulfur is donated as persulfide by IscS. The chain is Probable tRNA sulfurtransferase from Bacillus velezensis (strain DSM 23117 / BGSC 10A6 / LMG 26770 / FZB42) (Bacillus amyloliquefaciens subsp. plantarum).